A 511-amino-acid polypeptide reads, in one-letter code: ATP synthase subunit alpha 1 (511 aa).

An ATP-binding site is contributed by 170 to 177 (GDRQTGKT).

It belongs to the ATPase alpha/beta chains family. F-type ATPases have 2 components, CF(1) - the catalytic core - and CF(0) - the membrane proton channel. CF(1) has five subunits: alpha(3), beta(3), gamma(1), delta(1), epsilon(1). CF(0) has three main subunits: a(1), b(2) and c(9-12). The alpha and beta chains form an alternating ring which encloses part of the gamma chain. CF(1) is attached to CF(0) by a central stalk formed by the gamma and epsilon chains, while a peripheral stalk is formed by the delta and b chains.

It localises to the cell inner membrane. It carries out the reaction ATP + H2O + 4 H(+)(in) = ADP + phosphate + 5 H(+)(out). Its function is as follows. Produces ATP from ADP in the presence of a proton gradient across the membrane. The alpha chain is a regulatory subunit. The chain is ATP synthase subunit alpha 1 from Gluconobacter oxydans (strain 621H) (Gluconobacter suboxydans).